The following is a 132-amino-acid chain: Small ribosomal subunit protein uS8 (132 aa).

Belongs to the universal ribosomal protein uS8 family. Part of the 30S ribosomal subunit. Contacts proteins S5 and S12.

Its function is as follows. One of the primary rRNA binding proteins, it binds directly to 16S rRNA central domain where it helps coordinate assembly of the platform of the 30S subunit. This Latilactobacillus sakei subsp. sakei (strain 23K) (Lactobacillus sakei subsp. sakei) protein is Small ribosomal subunit protein uS8.